Reading from the N-terminus, the 1398-residue chain is Pyrolysin (1398 aa).

A signal peptide spans 1 to 26 (MNKKGLTVLFIAIMLLSVVPVHFVSA). The propeptide occupies 27-149 (GTPPVSSENS…KTKEPSLEPK (123 aa)). Asparagine 152 carries N-linked (GlcNAc...) asparagine glycosylation. Residues 154–656 (TWVINALQFI…HGLVNVTKSW (503 aa)) enclose the Peptidase S8 domain. Aspartate 179 functions as the Charge relay system in the catalytic mechanism. N-linked (GlcNAc...) asparagine glycosylation is found at asparagine 222, asparagine 228, asparagine 240, asparagine 257, asparagine 262, asparagine 298, and asparagine 327. Residue histidine 365 is the Charge relay system of the active site. Asparagine 406 carries N-linked (GlcNAc...) asparagine glycosylation. Serine 590 serves as the catalytic Charge relay system. N-linked (GlcNAc...) asparagine glycosylation is found at asparagine 651, asparagine 663, asparagine 739, asparagine 792, asparagine 893, asparagine 908, asparagine 917, asparagine 929, asparagine 1048, asparagine 1056, asparagine 1084, asparagine 1117, asparagine 1133, asparagine 1140, asparagine 1148, asparagine 1208, asparagine 1233, asparagine 1237, and asparagine 1332.

Belongs to the peptidase S8 family. In terms of processing, LWM pyrolysin seems to be produced by autoproteolytic activation of HMW pyrolysin. Post-translationally, glycosylated.

Its subcellular location is the cell envelope. Has endopeptidase activity toward caseins, casein fragments including alpha-S1-casein and synthetic peptides. The protein is Pyrolysin (pls) of Pyrococcus furiosus (strain ATCC 43587 / DSM 3638 / JCM 8422 / Vc1).